Consider the following 364-residue polypeptide: Histidinol-phosphate aminotransferase (364 aa).

Lys-226 is subject to N6-(pyridoxal phosphate)lysine.

This sequence belongs to the class-II pyridoxal-phosphate-dependent aminotransferase family. Histidinol-phosphate aminotransferase subfamily. Homodimer. Pyridoxal 5'-phosphate serves as cofactor.

It catalyses the reaction L-histidinol phosphate + 2-oxoglutarate = 3-(imidazol-4-yl)-2-oxopropyl phosphate + L-glutamate. Its pathway is amino-acid biosynthesis; L-histidine biosynthesis; L-histidine from 5-phospho-alpha-D-ribose 1-diphosphate: step 7/9. In Campylobacter jejuni subsp. doylei (strain ATCC BAA-1458 / RM4099 / 269.97), this protein is Histidinol-phosphate aminotransferase.